A 345-amino-acid polypeptide reads, in one-letter code: RDS/peripherin-like protein xRDS36 (345 aa).

Over 1-24 the chain is Cytoplasmic; that stretch reads MVLFKAKFSFQRRVKLAQTLWLLS. The chain crosses the membrane as a helical span at residues 25–43; that stretch reads WLSVLVGCLTFGMGIFLKV. Over 44–61 the chain is Lumenal; it reads QLWIHNEVMDNTTAHAVP. N-linked (GlcNAc...) asparagine glycosylation is present at Asn54. A helical membrane pass occupies residues 62–80; sequence NTVITAGLVGILLGYFAGK. At 81 to 99 the chain is on the cytoplasmic side; the sequence is ISQASMDLTKYQRWKSFMM. The helical transmembrane segment at 100–123 threads the bilayer; sequence PFFFLAILSCIVCLAALVLSVALR. The Lumenal segment spans residues 124 to 264; the sequence is GTLEESLKIG…LGYYTGIMAT (141 aa). Asn229 carries N-linked (GlcNAc...) asparagine glycosylation. Residues 265–290 form a helical membrane-spanning segment; the sequence is NGAAVTLSFLLQASVLVSLRYVQTSM. The Cytoplasmic portion of the chain corresponds to 291–345; that stretch reads DKIRDPDDVEADTEGFLLEKGVMETVNSSLEKIKDLFKSNQVETAEGGGEGAAGS.

It belongs to the PRPH2/ROM1 family. Homodimer; disulfide-linked. Rod specific.

It localises to the membrane. This chain is RDS/peripherin-like protein xRDS36 (rds36), found in Xenopus laevis (African clawed frog).